We begin with the raw amino-acid sequence, 159 residues long: Large ribosomal subunit protein uL10 (159 aa).

Belongs to the universal ribosomal protein uL10 family. Part of the ribosomal stalk of the 50S ribosomal subunit. The N-terminus interacts with L11 and the large rRNA to form the base of the stalk. The C-terminus forms an elongated spine to which L12 dimers bind in a sequential fashion forming a multimeric L10(L12)X complex.

Forms part of the ribosomal stalk, playing a central role in the interaction of the ribosome with GTP-bound translation factors. In Campylobacter jejuni (strain RM1221), this protein is Large ribosomal subunit protein uL10.